Here is a 585-residue protein sequence, read N- to C-terminus: MVLIHTSVGFFKRFSTSATPSTSSASDWKTQQTLFRVATEISSILLQRRNWITHLQYVKSKLPRSTLTSPVFLQILRETRKCPKTTLDFFDFAKTHLRFEPDLKSHCRVIEVAAESGLLERAEMLLRPLVETNSVSLVVGEMHRWFEGEVSLSVSLSLVLEYYALKGSHHNGLEVFGFMRRLRLSPSQSAYNSLLGSLVKENQFRVALCLYSAMVRNGIVSDELTWDLIAQILCEQGRSKSVFKLMETGVESCKIYTNLVECYSRNGEFDAVFSLIHEMDDKKLELSFCSYGCVLDDACRLGDAEFIDKVLCLMVEKKFVTLGDSAVNDKIIERLCDMGKTFASEMLFRKACNGETVRLWDSTYGCMLKALSRKKRTKEAVDVYRMICRKGITVLDESCYIEFANALCRDDNSSEEEEELLVDVIKRGFVPCTHKLSEVLASMCRKRRWKSAEKLLDSVMEMEVYFDSFACGLLMERYCRSGKLEKALVLHEKIKKMKGSLDVNAYNAVLDRLMMRQKEMVEEAVVVFEYMKEINSVNSKSFTIMIQGLCRVKEMKKAMRSHDEMLRLGLKPDLVTYKRLILGFK.

PPR repeat units lie at residues 152–186, 187–221, 222–247, 252–286, 287–321, 324–358, 360–394, 396–431, 432–466, 467–501, 502–534, and 538–572; these read LSVSLSLVLEYYALKGSHHNGLEVFGFMRRLRLSP, SQSAYNSLLGSLVKENQFRVALCLYSAMVRNGIVS, DELTWDLIAQILCEQGRSKSVFKLME, SCKIYTNLVECYSRNGEFDAVFSLIHEMDDKKLEL, SFCSYGCVLDDACRLGDAEFIDKVLCLMVEKKFVT, DSAVNDKIIERLCDMGKTFASEMLFRKACNGETVR, WDSTYGCMLKALSRKKRTKEAVDVYRMICRKGITV, DESCYIEFANALCRDDNSSEEEEELLVDVIKRGFVP, CTHKLSEVLASMCRKRRWKSAEKLLDSVMEMEVYF, DSFACGLLMERYCRSGKLEKALVLHEKIKKMKGSL, DVNAYNAVLDRLMMRQKEMVEEAVVVFEYMKEI, and NSKSFTIMIQGLCRVKEMKKAMRSHDEMLRLGLKP.

This sequence belongs to the PPR family. P subfamily.

The polypeptide is Pentatricopeptide repeat-containing protein At4g21170 (Arabidopsis thaliana (Mouse-ear cress)).